Here is a 251-residue protein sequence, read N- to C-terminus: tRNA pseudouridine synthase A (251 aa).

The active-site Nucleophile is Asp53. A substrate-binding site is contributed by Tyr110.

This sequence belongs to the tRNA pseudouridine synthase TruA family. In terms of assembly, homodimer.

It catalyses the reaction uridine(38/39/40) in tRNA = pseudouridine(38/39/40) in tRNA. Its function is as follows. Formation of pseudouridine at positions 38, 39 and 40 in the anticodon stem and loop of transfer RNAs. This chain is tRNA pseudouridine synthase A, found in Mesoplasma florum (strain ATCC 33453 / NBRC 100688 / NCTC 11704 / L1) (Acholeplasma florum).